We begin with the raw amino-acid sequence, 824 residues long: Neuronal PAS domain-containing protein 2 (824 aa).

The segment covering 1 to 10 (MDEDEKDRAK) has biased composition (basic and acidic residues). The segment at 1 to 21 (MDEDEKDRAKRASRNKSEKKR) is disordered. Residues 1 to 61 (MDEDEKDRAK…VIGFLQKHNE (61 aa)) form a sufficient for heterodimer formation with BMAL1, E-box binding and for the effect of NADPH region. In terms of domain architecture, bHLH spans 9–59 (AKRASRNKSEKKRRDQFNVLIKELSSMLPGNTRKMDKTTVLEKVIGFLQKH). The region spanning 82 to 152 (NEEFTQLMLE…KILSSHMLVT (71 aa)) is the PAS 1 domain. 2 residues coordinate heme b: histidine 119 and histidine 171. One can recognise a PAS 2 domain in the interval 237–307 (FLKEMCIVDE…RCHQHLMQFG (71 aa)). The PAC domain occupies 311 to 354 (SCCYRFLTKGQQWIWLQTHYYITYHQWNSKPEFIVCTHSVVSYA). Disordered stretches follow at residues 367 to 437 (EDPP…MAEA), 556 to 667 (SSTQ…PDFS), 681 to 704 (QPMM…RQVK), and 739 to 824 (PSFP…QPPR). Positions 378-390 (ALKDKGSSLEPRQ) are enriched in basic and acidic residues. The span at 421-431 (TAMSEPTSTPT) shows a compositional bias: polar residues. The span at 559 to 576 (QRPEAQQQLQQRSAAVTQ) shows a compositional bias: low complexity. Polar residues predominate over residues 587 to 610 (GQISSAQVTSQHLLRESSVISTQG). Residues 614 to 636 (MRSSQLMQSSGRSGSSLVSPFSS) show a composition bias toward low complexity. 2 stretches are compositionally biased toward polar residues: residues 645–664 (LNLT…QPSP) and 694–704 (SEVSRTGRQVK). The segment covering 739-760 (PSFPASQPSPLQPAQARQQPPQ) has biased composition (low complexity). The span at 766–789 (QAPTSLHSEQQDSLLLSTYSQQPG) shows a compositional bias: polar residues. The segment covering 794–805 (PQPPPAQPQPLR) has biased composition (pro residues). Residues 809 to 824 (RVSSLSESSGLQQPPR) are compositionally biased toward low complexity.

In terms of assembly, component of the circadian clock oscillator which includes the CRY proteins, CLOCK or NPAS2, BMAL1 or BMAL2, CSNK1D and/or CSNK1E, TIMELESS and the PER proteins. Efficient DNA binding requires dimerization with another bHLH protein. Forms a heterodimer with BMAL1 and this heterodimerization is required for E-box-dependent transactivation. Interacts with NCOA3, KAT2B, CREBBP and EP300. It depends on heme as a cofactor.

It is found in the nucleus. With respect to regulation, carbon monoxide (CO) and the redox state of the cell can modulate the transcriptional activity of the NPAS2-BMAL1 heterodimer. NADH and NADPH enhance the DNA-binding activity of the heterodimer whereas CO binds the heme group in NPAS2 and inhibits the DNA-binding activity of the heterodimer. Functionally, transcriptional activator which forms a core component of the circadian clock. The circadian clock, an internal time-keeping system, regulates various physiological processes through the generation of approximately 24 hour circadian rhythms in gene expression, which are translated into rhythms in metabolism and behavior. It is derived from the Latin roots 'circa' (about) and 'diem' (day) and acts as an important regulator of a wide array of physiological functions including metabolism, sleep, body temperature, blood pressure, endocrine, immune, cardiovascular, and renal function. Consists of two major components: the central clock, residing in the suprachiasmatic nucleus (SCN) of the brain, and the peripheral clocks that are present in nearly every tissue and organ system. Both the central and peripheral clocks can be reset by environmental cues, also known as Zeitgebers (German for 'timegivers'). The predominant Zeitgeber for the central clock is light, which is sensed by retina and signals directly to the SCN. The central clock entrains the peripheral clocks through neuronal and hormonal signals, body temperature and feeding-related cues, aligning all clocks with the external light/dark cycle. Circadian rhythms allow an organism to achieve temporal homeostasis with its environment at the molecular level by regulating gene expression to create a peak of protein expression once every 24 hours to control when a particular physiological process is most active with respect to the solar day. Transcription and translation of core clock components (CLOCK, NPAS2, BMAL1, BMAL2, PER1, PER2, PER3, CRY1 and CRY2) plays a critical role in rhythm generation, whereas delays imposed by post-translational modifications (PTMs) are important for determining the period (tau) of the rhythms (tau refers to the period of a rhythm and is the length, in time, of one complete cycle). A diurnal rhythm is synchronized with the day/night cycle, while the ultradian and infradian rhythms have a period shorter and longer than 24 hours, respectively. Disruptions in the circadian rhythms contribute to the pathology of cardiovascular diseases, cancer, metabolic syndromes and aging. A transcription/translation feedback loop (TTFL) forms the core of the molecular circadian clock mechanism. Transcription factors, CLOCK or NPAS2 and BMAL1 or BMAL2, form the positive limb of the feedback loop, act in the form of a heterodimer and activate the transcription of core clock genes and clock-controlled genes (involved in key metabolic processes), harboring E-box elements (5'-CACGTG-3') within their promoters. The core clock genes: PER1/2/3 and CRY1/2 which are transcriptional repressors form the negative limb of the feedback loop and interact with the CLOCK|NPAS2-BMAL1|BMAL2 heterodimer inhibiting its activity and thereby negatively regulating their own expression. This heterodimer also activates nuclear receptors NR1D1/2 and RORA/B/G, which form a second feedback loop and which activate and repress BMAL1 transcription, respectively. The NPAS2-BMAL1 heterodimer positively regulates the expression of MAOA, F7 and LDHA and modulates the circadian rhythm of daytime contrast sensitivity by regulating the rhythmic expression of adenylate cyclase type 1 (ADCY1) in the retina. NPAS2 plays an important role in sleep homeostasis and in maintaining circadian behaviors in normal light/dark and feeding conditions and in the effective synchronization of feeding behavior with scheduled food availability. Regulates the gene transcription of key metabolic pathways in the liver and is involved in DNA damage response by regulating several cell cycle and DNA repair genes. Controls the circadian rhythm of NR0B2 expression by binding rhythmically to its promoter. Mediates the diurnal variation in the expression of GABARA1 receptor in the brain and contributes to the regulation of anxiety-like behaviors and GABAergic neurotransmission in the ventral striatum. The polypeptide is Neuronal PAS domain-containing protein 2 (NPAS2) (Homo sapiens (Human)).